Reading from the N-terminus, the 235-residue chain is MINKTKRLMVPRTVKIPRKTYFWGPTPLPGRHKADHSVTLLTIIRDYLRLSDKEREATRILANGLVKVDGKVVKERKFGVGFMDVIEISGESYRVVYNNQGALVLVSESKDRANMKPLQVKNKVIAPGNKIQLGFHDGRVMVTEDRSISVGDVVIASLPDMKITEIIKMQPGNKAFITGGSHVGETGTISKIEIKESSSANLVHFDEGFTTVKDHVFVIGSPRFTFTMPSGEVYP.

An S4 RNA-binding domain is found at 38-99 (VTLLTIIRDY…GESYRVVYNN (62 aa)).

This sequence belongs to the eukaryotic ribosomal protein eS4 family.

This chain is Small ribosomal subunit protein eS4 (rps4e), found in Thermoplasma volcanium (strain ATCC 51530 / DSM 4299 / JCM 9571 / NBRC 15438 / GSS1).